The primary structure comprises 107 residues: Protein Rev (107 aa).

Phosphoserine; by host CK2 is present on residues S5 and S8. The segment at 18-26 is homomultimerization; that stretch reads IIKILYQSN. Disordered regions lie at residues 26 to 48 and 81 to 107; these read NPYP…WRAR and LNLD…VGNP. Residues 34 to 50 carry the Nuclear localization signal and RNA-binding (RRE) motif; it reads TRQARRNRRRRWRARQR. Residues 36–48 are compositionally biased toward basic residues; the sequence is QARRNRRRRWRAR. Residues 73–84 carry the Nuclear export signal and binding to XPO1 motif; that stretch reads LQLPPLERLNLD. Low complexity predominate over residues 89–101; sequence SGTSGTQQSQGTT. S92 carries the phosphoserine; by host modification.

The protein belongs to the HIV-1 REV protein family. Homomultimer; when bound to the RRE. Multimeric assembly is essential for activity and may involve XPO1. Binds to human KPNB1, XPO1, TNPO1, RANBP5 and IPO7. Interacts with the viral Integrase. Interacts with human KHDRBS1. Interacts with human NAP1; this interaction decreases Rev multimerization and stimulates its activity. Interacts with human DEAD-box helicases DDX3 and DDX24; these interactions may serve for viral RNA export to the cytoplasm and packaging, respectively. Interacts with human PSIP1; this interaction may inhibit HIV-1 DNA integration by promoting dissociation of the Integrase-LEDGF/p75 complex. Post-translationally, asymmetrically arginine dimethylated at one site by host PRMT6. Methylation impairs the RNA-binding activity and export of viral RNA from the nucleus to the cytoplasm. Phosphorylated by protein kinase CK2. Presence of, and maybe binding to the N-terminus of the regulatory beta subunit of CK2 is necessary for CK2-mediated Rev's phosphorylation.

The protein resides in the host nucleus. Its subcellular location is the host nucleolus. The protein localises to the host cytoplasm. In terms of biological role, escorts unspliced or incompletely spliced viral pre-mRNAs (late transcripts) out of the nucleus of infected cells. These pre-mRNAs carry a recognition sequence called Rev responsive element (RRE) located in the env gene, that is not present in fully spliced viral mRNAs (early transcripts). This function is essential since most viral proteins are translated from unspliced or partially spliced pre-mRNAs which cannot exit the nucleus by the pathway used by fully processed cellular mRNAs. Rev itself is translated from a fully spliced mRNA that readily exits the nucleus. Rev's nuclear localization signal (NLS) binds directly to KPNB1/Importin beta-1 without previous binding to KPNA1/Importin alpha-1. KPNB1 binds to the GDP bound form of RAN (Ran-GDP) and targets Rev to the nucleus. In the nucleus, the conversion from Ran-GDP to Ran-GTP dissociates Rev from KPNB1 and allows Rev's binding to the RRE in viral pre-mRNAs. Rev multimerization on the RRE via cooperative assembly exposes its nuclear export signal (NES) to the surface. Rev can then form a complex with XPO1/CRM1 and Ran-GTP, leading to nuclear export of the complex. Conversion from Ran-GTP to Ran-GDP mediates dissociation of the Rev/RRE/XPO1/RAN complex, so that Rev can return to the nucleus for a subsequent round of export. Beside KPNB1, also seems to interact with TNPO1/Transportin-1, RANBP5/IPO5 and IPO7/RANBP7 for nuclear import. The nucleoporin-like HRB/RIP is an essential cofactor that probably indirectly interacts with Rev to release HIV RNAs from the perinuclear region to the cytoplasm. This Homo sapiens (Human) protein is Protein Rev.